Here is a 243-residue protein sequence, read N- to C-terminus: Isoprenyl transferase 2 (243 aa).

The active site involves Asp23. Asp23 contacts Mg(2+). Substrate is bound by residues 24-27 (GNGR), Trp28, Arg36, His40, and 68-70 (STE). The active-site Proton acceptor is the Asn71. Residues Trp72, Arg74, Arg191, and 197–199 (RTS) contribute to the substrate site. Residue Glu210 coordinates Mg(2+).

It belongs to the UPP synthase family. As to quaternary structure, homodimer. Mg(2+) is required as a cofactor.

Its function is as follows. Catalyzes the condensation of isopentenyl diphosphate (IPP) with allylic pyrophosphates generating different type of terpenoids. This is Isoprenyl transferase 2 from Corynebacterium glutamicum (strain ATCC 13032 / DSM 20300 / JCM 1318 / BCRC 11384 / CCUG 27702 / LMG 3730 / NBRC 12168 / NCIMB 10025 / NRRL B-2784 / 534).